Here is a 255-residue protein sequence, read N- to C-terminus: 5'-nucleotidase SurE (255 aa).

The a divalent metal cation site is built by Asp-8, Asp-9, Ser-39, and Asn-91.

It belongs to the SurE nucleotidase family. Requires a divalent metal cation as cofactor.

Its subcellular location is the cytoplasm. It carries out the reaction a ribonucleoside 5'-phosphate + H2O = a ribonucleoside + phosphate. Nucleotidase that shows phosphatase activity on nucleoside 5'-monophosphates. In Nitrosospira multiformis (strain ATCC 25196 / NCIMB 11849 / C 71), this protein is 5'-nucleotidase SurE.